The sequence spans 121 residues: Large ribosomal subunit protein uL18 (121 aa).

It belongs to the universal ribosomal protein uL18 family. As to quaternary structure, part of the 50S ribosomal subunit; part of the 5S rRNA/L5/L18/L25 subcomplex. Contacts the 5S and 23S rRNAs.

In terms of biological role, this is one of the proteins that bind and probably mediate the attachment of the 5S RNA into the large ribosomal subunit, where it forms part of the central protuberance. This Ureaplasma parvum serovar 3 (strain ATCC 27815 / 27 / NCTC 11736) protein is Large ribosomal subunit protein uL18.